The following is a 374-amino-acid chain: C-X-C chemokine receptor type 5 (374 aa).

At 1 to 57 (MNSPISLDMGAITYNMDDLYKELAIYSNSTEIPLQDSIFCSTEEGPLLTSFKTIFMP) the chain is on the extracellular side. The N-linked (GlcNAc...) asparagine glycan is linked to Asn-28. A helical transmembrane segment spans residues 58 to 78 (VAYSLIFLLGMMGNILVLVIL). The Cytoplasmic portion of the chain corresponds to 79–90 (ERHRHTRSSTET). The helical transmembrane segment at 91–111 (FLFHLAVADLLLVFILPFAVA) threads the bilayer. The Extracellular segment spans residues 112–126 (EGSVGWVLGTFLCKT). A disulfide bridge links Cys-124 with Cys-204. The chain crosses the membrane as a helical span at residues 127–147 (VIALHKINFYCSSLLLACIAV). Topologically, residues 148–169 (DRYLAIVHAVHAYRRRRLLSIH) are cytoplasmic. A helical transmembrane segment spans residues 170–190 (ITCSTIWLAGFLFALPELLFA). Over 191–221 (KVVQPHNNESLPQCIFSQENEAETRAWFASR) the chain is Extracellular. N-linked (GlcNAc...) asparagine glycosylation occurs at Asn-198. A helical transmembrane segment spans residues 222–242 (FLYHTGGFLLPMLVMAWCYVG). Residues 243–261 (VVHRLLQAQRRPQRQKAVR) are Cytoplasmic-facing. The chain crosses the membrane as a helical span at residues 262–282 (VAILVTSIFLLCWSPYHIVIF). At 283-306 (LDTLERLKAVNSSCELSGYLSVAI) the chain is on the extracellular side. Residues 307–327 (TLCEFLGLAHCCLNPMLYTFA) traverse the membrane as a helical segment. The Cytoplasmic segment spans residues 328-374 (GVKFRSDLSRLLTKLGCAGPASLCQLFPGWRKSSLSESENATSLTTF).

Belongs to the G-protein coupled receptor 1 family. Expressed in neuronal and lymphatic tissue.

Its subcellular location is the cell membrane. Cytokine receptor that binds to B-lymphocyte chemoattractant (BLC). Involved in B-cell migration into B-cell follicles of spleen and Peyer patches but not into those of mesenteric or peripheral lymph nodes. The chain is C-X-C chemokine receptor type 5 (Cxcr5) from Rattus norvegicus (Rat).